The chain runs to 502 residues: MSTDFILAVDQGTTSSRAIIFDKKGNIRKIAQKEFTQIYPKSGWVEHDAMEIWGTQSGVMREALEFGRVKPDQIAAIGITNQRETVVVWDKETGDPVYNAIVWQCRRTSSICDEIKRDPQFVKYIKENTGLVVDAYFSGTKVKWILDNVEGAREKANAGKLLMGTIDTWLIWNLTRGKVHATDYSNASRTMLFNINSLEWDKKILDYLNIPESMLPEVKNSSEVFGVTDSHTLGGAEIPIAGVAGDQHAALFGHCCFEKGMAKNTYGTGCFALMNVGDKPVYSDEGLLTTIAWAENGKPTYALEGSVFIAGAVIQWIRDGLGLVRSAEDSEYYATKIDSTNGVYLVPAFVGLGTPYWDMYARGTIVGITRDTKREHIIRAALEAIAYQAKDVLECMKEDTGLDLAGLRVDGGAVQNNFLMQFQSDILQSEISKPKINEITGLGAVFLAGLAVGFWKDKQELKSILTTEKVFEPQKDSQAVAHDYRGWKKAVERSKAWAECYS.

T13 is an ADP binding site. ATP contacts are provided by T13, T14, and S15. Residue T13 participates in sn-glycerol 3-phosphate binding. Position 17 (R17) interacts with ADP. Residues R83, E84, Y136, and D246 each coordinate sn-glycerol 3-phosphate. Residues R83, E84, Y136, D246, and Q247 each coordinate glycerol. T268 and G311 together coordinate ADP. 4 residues coordinate ATP: T268, G311, Q315, and G412. G412 and N416 together coordinate ADP.

It belongs to the FGGY kinase family.

It catalyses the reaction glycerol + ATP = sn-glycerol 3-phosphate + ADP + H(+). It functions in the pathway polyol metabolism; glycerol degradation via glycerol kinase pathway; sn-glycerol 3-phosphate from glycerol: step 1/1. With respect to regulation, inhibited by fructose 1,6-bisphosphate (FBP). Key enzyme in the regulation of glycerol uptake and metabolism. Catalyzes the phosphorylation of glycerol to yield sn-glycerol 3-phosphate. This is Glycerol kinase from Francisella tularensis subsp. tularensis (strain WY96-3418).